A 360-amino-acid chain; its full sequence is SUN domain-containing protein 3 (360 aa).

Residues 1–10 (MSGRPNSRGS) show a composition bias toward polar residues. The disordered stretch occupies residues 1–39 (MSGRPNSRGSSRLFRAPSEDASSGSSGSAVLPQEENPNA). At 1–47 (MSGRPNSRGSSRLFRAPSEDASSGSSGSAVLPQEENPNASGLTRSWK) the chain is on the nuclear side. Residues 48-67 (AVMGMVFILTLLLLGFINHM) form a helical membrane-spanning segment. Residues 68–360 (KLKEKAFPQK…RVHGTPKDDS (293 aa)) lie on the Perinuclear space side of the membrane. A coiled-coil region spans residues 103 to 142 (KEQLELLKKESQTLENNFREILFLIEQIDVLKALLRDMQD). Residues 196-357 (GASVVEAGTS…YRFRVHGTPK (162 aa)) enclose the SUN domain.

As to quaternary structure, self-associates. Interacts with SYNE1 and SPAG4/SUN4. Proposed to form a spermatogenesis-specific LINC complex with SYNE1 during sperm head formation possibly implicating a SUN domain-based heterotrimer with SPAG4/SUN4 associating with SYNE1.

It localises to the membrane. Its subcellular location is the nucleus envelope. The protein localises to the nucleus inner membrane. Functionally, as a probable component of the LINC (LInker of Nucleoskeleton and Cytoskeleton) complex, involved in the connection between the nuclear lamina and the cytoskeleton. The nucleocytoplasmic interactions established by the LINC complex play an important role in the transmission of mechanical forces across the nuclear envelope and in nuclear movement and positioning. May be involved in nuclear remodeling during sperm head formation in spermatogenesis. A probable SUN3:SYNE1 LINC complex may tether spermatid nuclei to posterior cytoskeletal structures such as the manchette. This is SUN domain-containing protein 3 (SUN3) from Bos taurus (Bovine).